The chain runs to 101 residues: Large ribosomal subunit protein uL24 (101 aa).

It belongs to the universal ribosomal protein uL24 family. Part of the 50S ribosomal subunit.

Its function is as follows. One of two assembly initiator proteins, it binds directly to the 5'-end of the 23S rRNA, where it nucleates assembly of the 50S subunit. In terms of biological role, one of the proteins that surrounds the polypeptide exit tunnel on the outside of the subunit. This chain is Large ribosomal subunit protein uL24, found in Borreliella burgdorferi (strain ATCC 35210 / DSM 4680 / CIP 102532 / B31) (Borrelia burgdorferi).